The sequence spans 164 residues: Probable calcium-binding protein CML17 (164 aa).

EF-hand domains follow at residues 4–39 (DQQA…LGMP), 40–75 (VHRE…VMRV), 88–123 (VDEA…LGIK), and 126–161 (RTAE…GAFA). Ca(2+) contacts are provided by aspartate 17, aspartate 19, aspartate 21, arginine 23, glutamate 28, aspartate 53, asparagine 55, aspartate 57, cysteine 59, glutamate 64, aspartate 101, asparagine 103, aspartate 105, glutamate 112, aspartate 139, aspartate 141, aspartate 143, arginine 145, and glutamate 150.

Potential calcium sensor. The polypeptide is Probable calcium-binding protein CML17 (CML17) (Oryza sativa subsp. japonica (Rice)).